Consider the following 265-residue polypeptide: 4-hydroxy-2-oxo-heptane-1,7-dioate aldolase (265 aa).

Histidine 45 acts as the Proton acceptor in catalysis. Glutamine 147 is a binding site for substrate. Glutamate 149 contacts a divalent metal cation. The substrate site is built by alanine 174 and aspartate 175. Aspartate 175 serves as a coordination point for a divalent metal cation.

This sequence belongs to the HpcH/HpaI aldolase family. As to quaternary structure, homohexamer; trimer of dimers. The cofactor is a divalent metal cation.

The catalysed reaction is 4-hydroxy-2-oxoheptanedioate = succinate semialdehyde + pyruvate. It functions in the pathway aromatic compound metabolism; 4-hydroxyphenylacetate degradation; pyruvate and succinate semialdehyde from 4-hydroxyphenylacetate: step 7/7. Functionally, catalyzes the reversible retro-aldol cleavage of 4-hydroxy-2-ketoheptane-1,7-dioate (HKHD) to pyruvate and succinic semialdehyde. In Klebsiella pneumoniae subsp. pneumoniae (strain ATCC 700721 / MGH 78578), this protein is 4-hydroxy-2-oxo-heptane-1,7-dioate aldolase.